The primary structure comprises 174 residues: Transcription antitermination protein NusB (174 aa).

Residues 1–11 are compositionally biased toward polar residues; that stretch reads MSEVETTNDQT. Residues 1–29 form a disordered region; sequence MSEVETTNDQTPAPKRKDKKPSRSQLRSA.

The protein belongs to the NusB family.

Functionally, involved in transcription antitermination. Required for transcription of ribosomal RNA (rRNA) genes. Binds specifically to the boxA antiterminator sequence of the ribosomal RNA (rrn) operons. This chain is Transcription antitermination protein NusB, found in Marinomonas sp. (strain MWYL1).